The following is an 83-amino-acid chain: Small ribosomal subunit protein uS17 (83 aa).

It belongs to the universal ribosomal protein uS17 family. As to quaternary structure, part of the 30S ribosomal subunit.

One of the primary rRNA binding proteins, it binds specifically to the 5'-end of 16S ribosomal RNA. The sequence is that of Small ribosomal subunit protein uS17 from Chlamydia muridarum (strain MoPn / Nigg).